A 704-amino-acid polypeptide reads, in one-letter code: Eukaryotic translation initiation factor 2-alpha kinase 1 (704 aa).

A Protein kinase domain is found at 224-667 (FEELELLGKG…LTSNLFHDLV (444 aa)). ATP contacts are provided by residues 230–238 (LGKGGYGSV) and lysine 253. Aspartate 491 serves as the catalytic Proton acceptor.

This sequence belongs to the protein kinase superfamily. Ser/Thr protein kinase family. GCN2 subfamily. In terms of processing, autophosphorylated.

It carries out the reaction L-seryl-[protein] + ATP = O-phospho-L-seryl-[protein] + ADP + H(+). It catalyses the reaction L-threonyl-[protein] + ATP = O-phospho-L-threonyl-[protein] + ADP + H(+). Mediates down-regulation of protein synthesis in response to stress conditions by the phosphorylation of the alpha subunit of eIF-2 (tif211) on 'Ser-52'. Protein synthesis is inhibited at the level of initiation. Activity is inhibited in the presence of heme. This chain is Eukaryotic translation initiation factor 2-alpha kinase 1 (hri1), found in Schizosaccharomyces pombe (strain 972 / ATCC 24843) (Fission yeast).